We begin with the raw amino-acid sequence, 405 residues long: Corticosteroid-binding globulin (405 aa).

Residues 1–22 form the signal peptide; sequence MPLLLYTCLLWLSTSGLWTVQA. N-linked (GlcNAc...) asparagine glycans are attached at residues Asn-26, Asn-31, Asn-96, and Asn-260. Residue Asn-286 coordinates cortisol. 2 N-linked (GlcNAc...) asparagine glycosylation sites follow: Asn-330 and Asn-369. Residue Trp-393 participates in cortisol binding.

It belongs to the serpin family. In terms of tissue distribution, expressed by the liver; secreted in plasma.

It localises to the secreted. In terms of biological role, major transport protein for glucocorticoids and progestins in the blood of almost all vertebrate species. This Pongo abelii (Sumatran orangutan) protein is Corticosteroid-binding globulin (SERPINA6).